A 224-amino-acid polypeptide reads, in one-letter code: Urease accessory protein UreF (224 aa).

Belongs to the UreF family. As to quaternary structure, ureD, UreF and UreG form a complex that acts as a GTP-hydrolysis-dependent molecular chaperone, activating the urease apoprotein by helping to assemble the nickel containing metallocenter of UreC. The UreE protein probably delivers the nickel.

It is found in the cytoplasm. Required for maturation of urease via the functional incorporation of the urease nickel metallocenter. The polypeptide is Urease accessory protein UreF (Pseudomonas fluorescens (strain SBW25)).